We begin with the raw amino-acid sequence, 100 residues long: Small ribosomal subunit protein uS14c (100 aa).

Positions 1-54 (MARKSLIQRERKRQKLEQKFHSIRRSSKKEISKVSSLSGKWEIHGKLQSPPRNS) are disordered.

This sequence belongs to the universal ribosomal protein uS14 family. Part of the 30S ribosomal subunit.

The protein resides in the plastid. Its subcellular location is the chloroplast. Its function is as follows. Binds 16S rRNA, required for the assembly of 30S particles. In Piper cenocladum (Ant piper), this protein is Small ribosomal subunit protein uS14c.